The sequence spans 433 residues: MGIIDEAKRGQITDEMRAISKLEGIPVEKVRNRISEGKIMLIRNAKYPSRKLVPIGKGLTTKVNVNIGTSSEVVDLDMELQKVKVANKWGDTLMDLSTGGDLDAIRRDIIKASDLPVGTVPVYQIFIESFKKKSGGAYFTEDELLNTVEKHLKDGVAFMTIHAGITKDLAIRALKSDRIIPIVSRGGDMIAGWMIHNNSENPYRKNWDYVLEMFKEYDAVISLGDALRPGATGDAHDEFQIGELLETARLVKSALQKGVQVMVEGPGHVPLNEIAWDVKLMKKLTGGVPYYVLGPLPIDVGAPYDHIASAIGAAISSASGVDLLCYLTPAEHLGLPTVKQVEEGAIAYRIAAHAGDVVKLGRKARKWDDEVSYYRGKLDWENMISKLIDPQRAYQVYTQFGTPKVKACTMCGGYCPMMWAMDQVRKIGSSSSL.

Substrate is bound by residues N66, M94, Y123, H162, 184 to 186, 225 to 228, and E264; these read SRG and DALR. H268 is a binding site for Zn(2+). Residue Y291 participates in substrate binding. Residue H332 participates in Zn(2+) binding. The [4Fe-4S] cluster site is built by C408, C411, and C415.

Belongs to the ThiC family. [4Fe-4S] cluster serves as cofactor.

It carries out the reaction 5-amino-1-(5-phospho-beta-D-ribosyl)imidazole + S-adenosyl-L-methionine = 4-amino-2-methyl-5-(phosphooxymethyl)pyrimidine + CO + 5'-deoxyadenosine + formate + L-methionine + 3 H(+). Its pathway is cofactor biosynthesis; thiamine diphosphate biosynthesis. In terms of biological role, catalyzes the synthesis of the hydroxymethylpyrimidine phosphate (HMP-P) moiety of thiamine from aminoimidazole ribotide (AIR) in a radical S-adenosyl-L-methionine (SAM)-dependent reaction. The sequence is that of Phosphomethylpyrimidine synthase 2 from Saccharolobus solfataricus (strain ATCC 35092 / DSM 1617 / JCM 11322 / P2) (Sulfolobus solfataricus).